The sequence spans 501 residues: 25-hydroxyvitamin D-1 alpha hydroxylase, mitochondrial (501 aa).

A heme-binding site is contributed by cysteine 448.

Belongs to the cytochrome P450 family. Heme serves as cofactor. Kidney.

It localises to the mitochondrion membrane. It catalyses the reaction calcidiol + 2 reduced [adrenodoxin] + O2 + 2 H(+) = calcitriol + 2 oxidized [adrenodoxin] + H2O. The enzyme catalyses secalciferol + 2 reduced [adrenodoxin] + O2 + 2 H(+) = calcitetrol + 2 oxidized [adrenodoxin] + H2O. It functions in the pathway hormone biosynthesis; cholecalciferol biosynthesis. Its function is as follows. Catalyzes the conversion of 25-hydroxyvitamin D3 (25(OH)D3) to 1-alpha,25-dihydroxyvitamin D3 (1alpha,25(OH)(2)D3), and of 24,25-dihydroxyvitamin D3 (24,25(OH)(2)D3) to 1-alpha,24,25-trihydroxyvitamin D3 (1alpha,24,25(OH)(3)D3). Is also active with 25-hydroxy-24-oxo-vitamin D3. Plays an important role in normal bone growth, calcium metabolism, and tissue differentiation. The polypeptide is 25-hydroxyvitamin D-1 alpha hydroxylase, mitochondrial (Cyp27b1) (Rattus norvegicus (Rat)).